The following is a 362-amino-acid chain: Peptide chain release factor 2 (362 aa).

Position 250 is an N5-methylglutamine (Gln250).

It belongs to the prokaryotic/mitochondrial release factor family. In terms of processing, methylated by PrmC. Methylation increases the termination efficiency of RF2.

The protein localises to the cytoplasm. Its function is as follows. Peptide chain release factor 2 directs the termination of translation in response to the peptide chain termination codons UGA and UAA. The chain is Peptide chain release factor 2 from Clostridium perfringens (strain ATCC 13124 / DSM 756 / JCM 1290 / NCIMB 6125 / NCTC 8237 / Type A).